A 388-amino-acid chain; its full sequence is Xylose isomerase (388 aa).

Active-site residues include His54 and Asp57. Mg(2+) contacts are provided by Glu181, Glu217, His220, Asp245, Asp255, Asp257, and Asp287.

It belongs to the xylose isomerase family. As to quaternary structure, homotetramer. The cofactor is Mg(2+).

The protein resides in the cytoplasm. The enzyme catalyses alpha-D-xylose = alpha-D-xylulofuranose. The sequence is that of Xylose isomerase from Streptomyces thermocyaneoviolaceus.